A 172-amino-acid polypeptide reads, in one-letter code: 3-phenylpropionate/cinnamic acid dioxygenase subunit beta (172 aa).

The protein belongs to the bacterial ring-hydroxylating dioxygenase beta subunit family. This dioxygenase system consists of four proteins: the two subunits of the hydroxylase component (HcaE and HcaF), a ferredoxin (HcaC) and a ferredoxin reductase (HcaD).

The catalysed reaction is 3-phenylpropanoate + NADH + O2 + H(+) = 3-(cis-5,6-dihydroxycyclohexa-1,3-dien-1-yl)propanoate + NAD(+). It catalyses the reaction (E)-cinnamate + NADH + O2 + H(+) = (2E)-3-(cis-5,6-dihydroxycyclohexa-1,3-dien-1-yl)prop-2-enoate + NAD(+). The protein operates within aromatic compound metabolism; 3-phenylpropanoate degradation. In terms of biological role, part of the multicomponent 3-phenylpropionate dioxygenase. Converts 3-phenylpropionic acid (PP) and cinnamic acid (CI) into 3-phenylpropionate-dihydrodiol (PP-dihydrodiol) and cinnamic acid-dihydrodiol (CI-dihydrodiol), respectively. This Escherichia coli O157:H7 protein is 3-phenylpropionate/cinnamic acid dioxygenase subunit beta.